Consider the following 515-residue polypeptide: 2,3-bisphosphoglycerate-independent phosphoglycerate mutase (515 aa).

Positions 14 and 63 each coordinate Mn(2+). Ser-63 is a catalytic residue. Substrate is bound by residues His-124, Arg-154 to Asp-155, Arg-186, Arg-192, Arg-259 to Arg-262, and Lys-334. Asp-401, His-405, Asp-442, His-443, and His-460 together coordinate Mn(2+).

This sequence belongs to the BPG-independent phosphoglycerate mutase family. The cofactor is Mg(2+). Mn(2+) is required as a cofactor.

It carries out the reaction (2R)-2-phosphoglycerate = (2R)-3-phosphoglycerate. The protein operates within carbohydrate degradation; glycolysis; pyruvate from D-glyceraldehyde 3-phosphate: step 3/5. Activity is not affected by 2,3-bisphosphoglycerate. Its function is as follows. Catalyzes the interconversion of 2-phosphoglycerate and 3-phosphoglycerate. The polypeptide is 2,3-bisphosphoglycerate-independent phosphoglycerate mutase (Brugia malayi (Filarial nematode worm)).